The following is a 596-amino-acid chain: Elongation factor 4 (596 aa).

Residues Asn2–Lys183 enclose the tr-type G domain. Residues Asp14–Thr19 and Asn130–Asp133 contribute to the GTP site.

It belongs to the TRAFAC class translation factor GTPase superfamily. Classic translation factor GTPase family. LepA subfamily.

Its subcellular location is the cell inner membrane. It carries out the reaction GTP + H2O = GDP + phosphate + H(+). Required for accurate and efficient protein synthesis under certain stress conditions. May act as a fidelity factor of the translation reaction, by catalyzing a one-codon backward translocation of tRNAs on improperly translocated ribosomes. Back-translocation proceeds from a post-translocation (POST) complex to a pre-translocation (PRE) complex, thus giving elongation factor G a second chance to translocate the tRNAs correctly. Binds to ribosomes in a GTP-dependent manner. In Campylobacter fetus subsp. fetus (strain 82-40), this protein is Elongation factor 4.